The primary structure comprises 403 residues: 26S proteasome regulatory subunit 8 homolog (403 aa).

Position 186–193 (186–193) interacts with ATP; that stretch reads GPPGTGKT.

It belongs to the AAA ATPase family.

It is found in the cytoplasm. Its subcellular location is the nucleus. Functionally, the 26S proteasome is involved in the ATP-dependent degradation of ubiquitinated proteins. The regulatory (or ATPase) complex confers ATP dependency and substrate specificity to the 26S complex. This is 26S proteasome regulatory subunit 8 homolog (let1) from Schizosaccharomyces pombe (strain 972 / ATCC 24843) (Fission yeast).